We begin with the raw amino-acid sequence, 541 residues long: Eukaryotic translation initiation factor 3 subunit L (541 aa).

Positions 308–516 constitute a PCI domain; it reads TFSDILLYIQ…IHIADTKVSH (209 aa).

Belongs to the eIF-3 subunit L family. Component of the eukaryotic translation initiation factor 3 (eIF-3) complex. The eIF-3 complex interacts with pix.

It is found in the cytoplasm. Its function is as follows. Component of the eukaryotic translation initiation factor 3 (eIF-3) complex, which is involved in protein synthesis of a specialized repertoire of mRNAs and, together with other initiation factors, stimulates binding of mRNA and methionyl-tRNAi to the 40S ribosome. The eIF-3 complex specifically targets and initiates translation of a subset of mRNAs involved in cell proliferation. The sequence is that of Eukaryotic translation initiation factor 3 subunit L from Drosophila persimilis (Fruit fly).